Here is a 475-residue protein sequence, read N- to C-terminus: Sulfate adenylyltransferase subunit 1 (475 aa).

Positions 25-239 (KSLLRFLTCG…EVLETVEIQR (215 aa)) constitute a tr-type G domain. A G1 region spans residues 34 to 41 (GSVDDGKS). 34 to 41 (GSVDDGKS) lines the GTP pocket. A G2 region spans residues 92–96 (GITID). Residues 113 to 116 (DTPG) are G3. GTP-binding positions include 113-117 (DTPGH) and 168-171 (NKMD). A G4 region spans residues 168–171 (NKMD). The interval 206-208 (SAL) is G5.

Belongs to the TRAFAC class translation factor GTPase superfamily. Classic translation factor GTPase family. CysN/NodQ subfamily. Heterodimer composed of CysD, the smaller subunit, and CysN.

It carries out the reaction sulfate + ATP + H(+) = adenosine 5'-phosphosulfate + diphosphate. The protein operates within sulfur metabolism; hydrogen sulfide biosynthesis; sulfite from sulfate: step 1/3. With CysD forms the ATP sulfurylase (ATPS) that catalyzes the adenylation of sulfate producing adenosine 5'-phosphosulfate (APS) and diphosphate, the first enzymatic step in sulfur assimilation pathway. APS synthesis involves the formation of a high-energy phosphoric-sulfuric acid anhydride bond driven by GTP hydrolysis by CysN coupled to ATP hydrolysis by CysD. The chain is Sulfate adenylyltransferase subunit 1 from Escherichia coli (strain 55989 / EAEC).